Reading from the N-terminus, the 410-residue chain is Cysteine desulfurase IscS (410 aa).

Pyridoxal 5'-phosphate is bound by residues 80 to 81 (AT), Asn-160, Gln-188, and 208 to 210 (SGH). At Lys-211 the chain carries N6-(pyridoxal phosphate)lysine. Pyridoxal 5'-phosphate is bound at residue Thr-248. The active-site Cysteine persulfide intermediate is the Cys-334. Cys-334 is a binding site for [2Fe-2S] cluster.

Belongs to the class-V pyridoxal-phosphate-dependent aminotransferase family. NifS/IscS subfamily. Homodimer. Forms a heterotetramer with IscU, interacts with other sulfur acceptors. It depends on pyridoxal 5'-phosphate as a cofactor.

It localises to the cytoplasm. It catalyses the reaction (sulfur carrier)-H + L-cysteine = (sulfur carrier)-SH + L-alanine. The protein operates within cofactor biosynthesis; iron-sulfur cluster biosynthesis. In terms of biological role, master enzyme that delivers sulfur to a number of partners involved in Fe-S cluster assembly, tRNA modification or cofactor biosynthesis. Catalyzes the removal of elemental sulfur atoms from cysteine to produce alanine. Functions as a sulfur delivery protein for Fe-S cluster synthesis onto IscU, an Fe-S scaffold assembly protein, as well as other S acceptor proteins. This is Cysteine desulfurase IscS from Rickettsia peacockii (strain Rustic).